We begin with the raw amino-acid sequence, 84 residues long: Omega-theraphotoxin-Pm1a (84 aa).

An N-terminal signal peptide occupies residues 1 to 21 (MKTSMLAVFVALPLAFVLTAA). Positions 22 to 45 (TEERAHPNELVNSLVELVKLDAER) are excised as a propeptide. Intrachain disulfides connect Cys52–Cys66, Cys59–Cys71, and Cys65–Cys78.

This sequence belongs to the neurotoxin 10 (Hwtx-1) family. 41 (Jztx-36) subfamily. As to expression, expressed by the venom gland.

The protein resides in the secreted. Omega-conotoxins act at presynaptic membranes, they bind and block voltage-gated calcium channels (Cav). This toxin inhibits barium currents (IBa) mediated by L-type voltage-gated calcium channels Cav1.2/CACNA1C (IC(50)=825 nM) and Cav1.3/CACNA1C (IC(50)=2240 nM). This chain is Omega-theraphotoxin-Pm1a, found in Pelinobius muticus (King baboon spider).